Reading from the N-terminus, the 614-residue chain is Signal recognition particle receptor subunit alpha homolog (614 aa).

Residues 119 to 244 are disordered; it reads EASAKQVKAP…DRSRDSPDDV (126 aa). Residues 149 to 160 show a composition bias toward basic and acidic residues; the sequence is QDDKKPVEKRVN. The segment covering 164–178 has biased composition (pro residues); sequence APPPSKSQPSSPPTG. A compositionally biased stretch (basic and acidic residues) spans 232–241; that stretch reads ALLDRSRDSP. Phosphoserine occurs at positions 237 and 240. Y246 is subject to Phosphotyrosine. A phosphoserine mark is found at S268, S278, and S279. Positions 268-285 are enriched in acidic residues; sequence SEDEADNEDASSEGEAEE. The disordered stretch occupies residues 268-290; it reads SEDEADNEDASSEGEAEEQVQSK. Residues 396 to 613 are NG domain; sequence YTIIFCGVNG…NVNAVVNSLM (218 aa). GTP is bound by residues 402 to 409, 497 to 501, and 565 to 568; these read GVNGVGKS, DTAGR, and TKFD.

This sequence belongs to the GTP-binding SRP family. In terms of assembly, heterodimer of SrpRalpha and SrpRbeta. As to expression, in 8-9 hours embryos, expression is seen in a segmental pattern along embryonic ventral midline.

The protein localises to the endoplasmic reticulum membrane. Functionally, component of the SRP (signal recognition particle) receptor. Ensures, in conjunction with the signal recognition particle, the correct targeting of the nascent secretory proteins to the endoplasmic reticulum membrane system. Forms a guanosine 5'-triphosphate (GTP)-dependent complex with the SRP subunit Srp54. SRP receptor compaction and GTPase rearrangement drive SRP-mediated cotranslational protein translocation into the ER. May have a role in axonogenesis. This chain is Signal recognition particle receptor subunit alpha homolog, found in Drosophila melanogaster (Fruit fly).